The chain runs to 384 residues: PqqA peptide cyclase (384 aa).

The region spanning 5–220 (VGLPLWLLAE…TNEYREKLKA (216 aa)) is the Radical SAM core domain. Cysteine 19, cysteine 23, and cysteine 26 together coordinate [4Fe-4S] cluster.

Belongs to the radical SAM superfamily. PqqE family. As to quaternary structure, interacts with PqqD. The interaction is necessary for activity of PqqE. The cofactor is [4Fe-4S] cluster.

The enzyme catalyses [PQQ precursor protein] + S-adenosyl-L-methionine = E-Y cross-linked-[PQQ precursor protein] + 5'-deoxyadenosine + L-methionine + H(+). The protein operates within cofactor biosynthesis; pyrroloquinoline quinone biosynthesis. Functionally, catalyzes the cross-linking of a glutamate residue and a tyrosine residue in the PqqA protein as part of the biosynthesis of pyrroloquinoline quinone (PQQ). This Acinetobacter baumannii (strain AB0057) protein is PqqA peptide cyclase.